The primary structure comprises 431 residues: 23S rRNA (uracil(1939)-C(5))-methyltransferase RlmD (431 aa).

In terms of domain architecture, TRAM spans 10-68 (RVTTRQIITVKVNDLDSFGQGVARHNGKALFIPGLLPEESAEVIITEDKKQFARARVSR). 4 residues coordinate [4Fe-4S] cluster: Cys81, Cys87, Cys90, and Cys161. The S-adenosyl-L-methionine site is built by Gln264, Phe293, Asn298, Glu314, Asn341, and Asp362. Cys388 acts as the Nucleophile in catalysis.

Belongs to the class I-like SAM-binding methyltransferase superfamily. RNA M5U methyltransferase family. RlmD subfamily.

It carries out the reaction uridine(1939) in 23S rRNA + S-adenosyl-L-methionine = 5-methyluridine(1939) in 23S rRNA + S-adenosyl-L-homocysteine + H(+). Catalyzes the formation of 5-methyl-uridine at position 1939 (m5U1939) in 23S rRNA. The sequence is that of 23S rRNA (uracil(1939)-C(5))-methyltransferase RlmD from Salmonella paratyphi A (strain ATCC 9150 / SARB42).